The primary structure comprises 109 residues: UPF0482 protein ESA_01750 (109 aa).

A signal peptide spans 1 to 24 (MNKFLRHSLLLALLTGALSGVANA). The segment covering 38 to 55 (RTRQDAAMDKEQWNDTRS) has biased composition (basic and acidic residues). Residues 38-63 (RTRQDAAMDKEQWNDTRSLRQKVNKR) are disordered.

Belongs to the UPF0482 family.

This Cronobacter sakazakii (strain ATCC BAA-894) (Enterobacter sakazakii) protein is UPF0482 protein ESA_01750.